A 216-amino-acid polypeptide reads, in one-letter code: MOB kinase activator 1B (216 aa).

The residue at position 2 (Ser2) is an N-acetylserine. Thr12 and Thr35 each carry phosphothreonine; by STK4/MST1. Zn(2+) contacts are provided by Cys79, Cys84, His161, and His166.

The protein belongs to the MOB1/phocein family. As to quaternary structure, binds STK38L. Interacts with LATS1 and LATS2. Phosphorylated by STK3/MST2 and STK4/MST1 and this phosphorylation enhances its binding to LATS1. Adrenal gland, bone marrow, brain, lung, placenta, prostate, salivary gland, skeletal muscle, testis, thymus, thyroid gland, uterus, colon with mucosa, fetal brain and fetal liver.

Its subcellular location is the cytoplasm. It localises to the nucleus. In terms of biological role, activator of LATS1/2 in the Hippo signaling pathway which plays a pivotal role in organ size control and tumor suppression by restricting proliferation and promoting apoptosis. The core of this pathway is composed of a kinase cascade wherein STK3/MST2 and STK4/MST1, in complex with its regulatory protein SAV1, phosphorylates and activates LATS1/2 in complex with its regulatory protein MOB1, which in turn phosphorylates and inactivates YAP1 oncoprotein and WWTR1/TAZ. Phosphorylation of YAP1 by LATS1/2 inhibits its translocation into the nucleus to regulate cellular genes important for cell proliferation, cell death, and cell migration. Stimulates the kinase activity of STK38L. The chain is MOB kinase activator 1B from Homo sapiens (Human).